Here is a 477-residue protein sequence, read N- to C-terminus: S-triazine hydrolase (477 aa).

2 stretches are compositionally biased toward low complexity: residues 38-73 (SPTT…KSSS) and 120-132 (PLSS…DPTT). Disordered stretches follow at residues 38–77 (SPTT…GVVH) and 120–143 (PLSS…GSPF).

The protein belongs to the metallo-dependent hydrolases superfamily. ATZ/TRZ family.

It participates in xenobiotic degradation; melamine degradation. Hydrolytic deamination of the S-triazine substrate melamine. This chain is S-triazine hydrolase (trzA), found in Gordonia rubripertincta (Rhodococcus corallinus).